The following is a 480-amino-acid chain: Bindin (480 aa).

A signal peptide spans 1–20; that stretch reads MDSQVLPLILLIIVFAASSA. The propeptide occupies 21 to 247; it reads HGHFPHRTNQ…GEMRAERQRR (227 aa). The tract at residues 161–211 is disordered; that stretch reads AEMRHRRSAKDDDVNKRASPRKGSSPAGKKVQIMEQDAGKGDAHNEKEVVK. The span at 197–211 shows a compositional bias: basic and acidic residues; sequence DAGKGDAHNEKEVVK. Residues 377-385 form a fucose-binding domain region; sequence LRHLRHHSN. A helical transmembrane segment spans residues 431–451; that stretch reads GAGAVAGAAMAAGMPPYPGGA. The tract at residues 452–480 is disordered; it reads QGGMRVGGQPQNPMGGNAYNPMTGYRQQG.

It belongs to the bindin family.

Its subcellular location is the cytoplasmic vesicle. The protein localises to the secretory vesicle. The protein resides in the acrosome membrane. Functionally, species-specific sea urchin sperm protein required for adhesion of sperm to the egg surface during fertilization. Bindin coats the acrosomal process after it is externalized by the acrosome reaction. It binds to sulfated, fucose-containing polysaccharides on the vitelline layer receptor proteoglycans which cover the egg plasma membrane. This Arbacia punctulata (Punctuate sea urchin) protein is Bindin.